Reading from the N-terminus, the 294-residue chain is Elongation factor Ts (294 aa).

Residues Thr80 to Val83 form an involved in Mg(2+) ion dislocation from EF-Tu region.

It belongs to the EF-Ts family.

It localises to the cytoplasm. Its function is as follows. Associates with the EF-Tu.GDP complex and induces the exchange of GDP to GTP. It remains bound to the aminoacyl-tRNA.EF-Tu.GTP complex up to the GTP hydrolysis stage on the ribosome. This chain is Elongation factor Ts, found in Polynucleobacter asymbioticus (strain DSM 18221 / CIP 109841 / QLW-P1DMWA-1) (Polynucleobacter necessarius subsp. asymbioticus).